The chain runs to 1483 residues: Heme-responsive zinc finger transcription factor HAP1 (1483 aa).

A compositionally biased stretch (polar residues) spans 1-50; that stretch reads MSNTPYNSSVPSIASMTQSSVSRSPNMHTATTPGANTSSNSPPLHMSSDS. The disordered stretch occupies residues 1–56; the sequence is MSNTPYNSSVPSIASMTQSSVSRSPNMHTATTPGANTSSNSPPLHMSSDSSKIKRK. The Zn(2+) site is built by cysteine 64, cysteine 67, cysteine 74, cysteine 81, cysteine 84, and cysteine 93. Positions 64–93 form a DNA-binding region, zn(2)-C6 fungal-type; it reads CTICRKRKVKCDKLRPHCQQCTKTGVAHLC. A coiled-coil region spans residues 105-134; it reads EKELLKDNELKKLRERVKSLEKTLSKVHSS. The span at 162–176 shows a compositional bias: polar residues; the sequence is VNANTGSASSASHMH. The segment at 162–208 is disordered; that stretch reads VNANTGSASSASHMHQQQQQQQQQEQQQDFSRSANANANSSSLSISN. The span at 177–208 shows a compositional bias: low complexity; sequence QQQQQQQQQEQQQDFSRSANANANSSSLSISN. Positions 244–444 are heme-responsive; required for HMC formation; that stretch reads KGDPYLKLLW…NTIPHHQPQS (201 aa). 6 HRM repeats span residues 280–285, 299–304, 323–328, 347–352, 389–394, and 415–420; these read KCPINH, KCPVDH, RCPVDH, and RCPIDH. Polar residues-rich tracts occupy residues 432-447 and 706-734; these read STHN…SGSH and QLNA…NPTL. Disordered regions lie at residues 432–458 and 706–767; these read STHN…NRKH and QLNA…KENQ. Positions 735–759 are enriched in low complexity; sequence NNNMSAATTNSSSRSGSADSRSGSN. One copy of the HRM 7 repeat lies at 1192–1197; sequence KCPVYQ. Residues 1384–1411 are disordered; it reads TANTDTSANGSALSTLTSPQGSDLASNS. Positions 1388 to 1411 are enriched in polar residues; it reads DTSANGSALSTLTSPQGSDLASNS.

As to quaternary structure, binds DNA as a homodimer. Interacts with SRO9 and YDJ1. In the absence of heme, binds to at least four cellular proteins, including YDJ1 and SRO9, forming a high-molecular-weight complex (HMC) which results in repression of its activity and dictates its DNA-binding specificity.

The protein resides in the nucleus. Its function is as follows. Regulation of oxygen dependent gene expression. It modulates the expression of Iso-1 (CYP1) and Iso-2 (CYP3) cytochrome c. In response to heme, promotes transcription of genes encoding functions required for respiration, controlling oxidative damage and repression of anaerobic genes. Binds to the sequence 5'-CGGNNNTNNCGG-3'. The polypeptide is Heme-responsive zinc finger transcription factor HAP1 (HAP1) (Saccharomyces cerevisiae (strain RM11-1a) (Baker's yeast)).